A 162-amino-acid chain; its full sequence is Transcription antitermination protein RfaH (162 aa).

Belongs to the RfaH family. In terms of assembly, interacts with both the nontemplate DNA and the RNA polymerase (RNAP).

Functionally, enhances distal genes transcription elongation in a specialized subset of operons that encode extracytoplasmic components. RfaH is recruited into a multi-component RNA polymerase complex by the ops element, which is a short conserved DNA sequence located downstream of the main promoter of these operons. Once bound, RfaH suppresses pausing and inhibits Rho-dependent and intrinsic termination at a subset of sites. Termination signals are bypassed, which allows complete synthesis of long RNA chains. Also negatively controls expression and surface presentation of AG43 and possibly another AG43-independent factor that mediates cell-cell interactions and biofilm formation,. This is Transcription antitermination protein RfaH from Escherichia coli O6:K15:H31 (strain 536 / UPEC).